Here is a 1180-residue protein sequence, read N- to C-terminus: DNA-directed RNA polymerase subunit beta (1180 aa).

Acidic residues predominate over residues 1154–1164 (EMKELDDEDEQ). The segment at 1154–1180 (EMKELDDEDEQASDKLNLNIDSTESNV) is disordered. Over residues 1167–1180 (DKLNLNIDSTESNV) the composition is skewed to polar residues.

It belongs to the RNA polymerase beta chain family. As to quaternary structure, the RNAP catalytic core consists of 2 alpha, 1 beta, 1 beta' and 1 omega subunit. When a sigma factor is associated with the core the holoenzyme is formed, which can initiate transcription.

The catalysed reaction is RNA(n) + a ribonucleoside 5'-triphosphate = RNA(n+1) + diphosphate. Functionally, DNA-dependent RNA polymerase catalyzes the transcription of DNA into RNA using the four ribonucleoside triphosphates as substrates. The polypeptide is DNA-directed RNA polymerase subunit beta (Halalkalibacterium halodurans (strain ATCC BAA-125 / DSM 18197 / FERM 7344 / JCM 9153 / C-125) (Bacillus halodurans)).